The chain runs to 142 residues: MTFSSAEKAAIASLWGKVSGHTDEIGAEALERLFLSYPQTKTYFSHFDLSHGSKDLRSHGGKVVKAIGNAATHIDDIPHALSALSDLHAFKLKVDPGNFKLLSHAIQVTLAIHFPAEFNADAQAAWDKFLAVVSAVLVSKYR.

The Globin domain maps to T2–R142. H59 contributes to the O2 binding site. Residue H88 participates in heme b binding.

This sequence belongs to the globin family. Heterotetramer of two alpha chains and two beta chains. In terms of tissue distribution, red blood cells.

This is a larval (tadpole) alpha-globin. The protein is Hemoglobin subunit alpha-5 (hba5) of Xenopus laevis (African clawed frog).